The primary structure comprises 209 residues: uncharacterized protein (209 aa).

Catalysis depends on charge relay system residues Ser-119 and His-160.

This sequence belongs to the peptidase S51 family.

This is an uncharacterized protein from Listeria innocua serovar 6a (strain ATCC BAA-680 / CLIP 11262).